The sequence spans 91 residues: ATP-dependent Clp protease adapter protein ClpS (91 aa).

The protein belongs to the ClpS family. Binds to the N-terminal domain of the chaperone ClpA.

Its function is as follows. Involved in the modulation of the specificity of the ClpAP-mediated ATP-dependent protein degradation. This Synechococcus sp. (strain ATCC 27144 / PCC 6301 / SAUG 1402/1) (Anacystis nidulans) protein is ATP-dependent Clp protease adapter protein ClpS.